The sequence spans 436 residues: Probable 4-aminobutyrate aminotransferase (436 aa).

At Lys-281 the chain carries N6-(pyridoxal phosphate)lysine.

The protein belongs to the class-III pyridoxal-phosphate-dependent aminotransferase family. Pyridoxal 5'-phosphate is required as a cofactor.

It carries out the reaction 4-aminobutanoate + 2-oxoglutarate = succinate semialdehyde + L-glutamate. The enzyme catalyses (S)-3-amino-2-methylpropanoate + 2-oxoglutarate = 2-methyl-3-oxopropanoate + L-glutamate. Its pathway is amino-acid degradation; 4-aminobutanoate degradation. The polypeptide is Probable 4-aminobutyrate aminotransferase (gabT) (Bacillus subtilis (strain 168)).